The chain runs to 430 residues: Adenylosuccinate synthetase (430 aa).

Residues 12–18 (GDEGKGK) and 40–42 (GHT) contribute to the GTP site. The Proton acceptor role is filled by D13. Positions 13 and 40 each coordinate Mg(2+). IMP contacts are provided by residues 13–16 (DEGK), 38–41 (NAGH), T128, R142, Q223, T238, and R302. H41 functions as the Proton donor in the catalytic mechanism. 298–304 (VNTGRKR) contributes to the substrate binding site. GTP-binding positions include R304, 330 to 332 (KLD), and 412 to 414 (GVG).

This sequence belongs to the adenylosuccinate synthetase family. Homodimer. It depends on Mg(2+) as a cofactor.

The protein localises to the cytoplasm. The catalysed reaction is IMP + L-aspartate + GTP = N(6)-(1,2-dicarboxyethyl)-AMP + GDP + phosphate + 2 H(+). Its pathway is purine metabolism; AMP biosynthesis via de novo pathway; AMP from IMP: step 1/2. Plays an important role in the de novo pathway of purine nucleotide biosynthesis. Catalyzes the first committed step in the biosynthesis of AMP from IMP. This chain is Adenylosuccinate synthetase, found in Corynebacterium aurimucosum (strain ATCC 700975 / DSM 44827 / CIP 107346 / CN-1) (Corynebacterium nigricans).